The following is a 450-amino-acid chain: MRECISIHIGQAGIQVGNACWELYCLEHGIQPDGQMPSDKTVGGGDDAFNTFFSETGAGKHVPRAVFVDLEPTVIDEVRTGAYRQLFHPEQLISGKEDAANNFARGHYTIGKEIVDLCLDRIRKLADNCTGLQGFLVFNAVGGGTGSGLGSLLLERLSVDYGKKSKLGFTVYPSPQVSTSVVEPYNSVLSTHSLLEHTDVAVLLDNEAIYDICRRSLDIERPTYTNLNRLVSQVISSLTASLRFDGALNVDVTEFQTNLVPYPRIHFMLSSYAPVISAEKAYHEQLSVAEITNSAFEPSSMMAKCDPRHGKYMACCLMYRGDVVPKDVNAAVATIKTKRTIQFVDWCPTGFKCGINYQPPTVVPGGDLAKVQRAVCMISNSTSVAEVFSRIDHKFDLMYTKRAFVHWYVGEGMEEGEFSEAREDLAALEKDYEEVGAESGEGDEGDEEEY.

Gln-11 serves as a coordination point for GTP. The residue at position 40 (Lys-40) is an N6-acetyllysine. Residues Glu-71, Gly-144, Thr-145, Thr-179, Asn-206, and Asn-228 each coordinate GTP. Glu-71 serves as a coordination point for Mg(2+). Glu-254 is a catalytic residue. A disordered region spans residues 431 to 450; it reads DYEEVGAESGEGDEGDEEEY.

The protein belongs to the tubulin family. As to quaternary structure, dimer of alpha and beta chains. A typical microtubule is a hollow water-filled tube with an outer diameter of 25 nm and an inner diameter of 15 nM. Alpha-beta heterodimers associate head-to-tail to form protofilaments running lengthwise along the microtubule wall with the beta-tubulin subunit facing the microtubule plus end conferring a structural polarity. Microtubules usually have 13 protofilaments but different protofilament numbers can be found in some organisms and specialized cells. Mg(2+) is required as a cofactor. In terms of processing, undergoes a tyrosination/detyrosination cycle, the cyclic removal and re-addition of a C-terminal tyrosine residue by the enzymes tubulin tyrosine carboxypeptidase (TTCP) and tubulin tyrosine ligase (TTL), respectively. Post-translationally, acetylation of alpha chains at Lys-40 stabilizes microtubules and affects affinity and processivity of microtubule motors. This modification has a role in multiple cellular functions, ranging from cell motility, cell cycle progression or cell differentiation to intracellular trafficking and signaling.

The protein localises to the cytoplasm. It localises to the cytoskeleton. The catalysed reaction is GTP + H2O = GDP + phosphate + H(+). Functionally, tubulin is the major constituent of microtubules, a cylinder consisting of laterally associated linear protofilaments composed of alpha- and beta-tubulin heterodimers. Microtubules grow by the addition of GTP-tubulin dimers to the microtubule end, where a stabilizing cap forms. Below the cap, tubulin dimers are in GDP-bound state, owing to GTPase activity of alpha-tubulin. This chain is Tubulin alpha-4 chain, found in Gossypium hirsutum (Upland cotton).